A 435-amino-acid chain; its full sequence is Cyclin-dependent kinase 15 (435 aa).

The 285-residue stretch at 103–387 (YLNLEKLGEG…AQEALVHDYF (285 aa)) folds into the Protein kinase domain. ATP is bound by residues 109 to 117 (LGEGSYATV) and lysine 132. Catalysis depends on aspartate 224, which acts as the Proton acceptor.

It belongs to the protein kinase superfamily. CMGC Ser/Thr protein kinase family. CDC2/CDKX subfamily. Mg(2+) serves as cofactor.

The catalysed reaction is L-seryl-[protein] + ATP = O-phospho-L-seryl-[protein] + ADP + H(+). It catalyses the reaction L-threonyl-[protein] + ATP = O-phospho-L-threonyl-[protein] + ADP + H(+). Its function is as follows. Serine/threonine-protein kinase that acts like an antiapoptotic protein that counters TRAIL/TNFSF10-induced apoptosis by inducing phosphorylation of BIRC5 at 'Thr-34'. This Homo sapiens (Human) protein is Cyclin-dependent kinase 15 (CDK15).